Here is a 303-residue protein sequence, read N- to C-terminus: BAG family molecular chaperone regulator 3 (303 aa).

Residues 1–11 (MMKMNTGTSPS) show a composition bias toward polar residues. Residues 1–27 (MMKMNTGTSPSVIGGGTSGNEWESRPG) are disordered. Residues 45–119 (FRVRVKYGSV…LVVKEDPISQ (75 aa)) enclose the Ubiquitin-like domain. The BAG domain occupies 138–216 (SISDISFEVD…KYVEALDLLK (79 aa)). The tract at residues 249–268 (VEEEEEEPRNSNASSSSGTP) is disordered. A compositionally biased stretch (polar residues) spans 258–267 (NSNASSSSGT). Ser-263 bears the Phosphoserine mark.

In terms of assembly, binds to the ATPase domain of HSP70/HSC70 chaperones. Interacts with HSP70-1.

Functionally, co-chaperone that regulates diverse cellular pathways, such as programmed cell death and stress responses. In Arabidopsis thaliana (Mouse-ear cress), this protein is BAG family molecular chaperone regulator 3 (BAG3).